A 271-amino-acid polypeptide reads, in one-letter code: Formamidopyrimidine-DNA glycosylase (271 aa).

Residue proline 2 is the Schiff-base intermediate with DNA of the active site. Glutamate 3 functions as the Proton donor in the catalytic mechanism. Lysine 58 acts as the Proton donor; for beta-elimination activity in catalysis. DNA is bound by residues histidine 91, arginine 110, and arginine 152. The segment at 237-271 (RAYGRGGQPCTVCQTELKEIKLGQRTSVFCPSCQR) adopts an FPG-type zinc-finger fold. Arginine 261 functions as the Proton donor; for delta-elimination activity in the catalytic mechanism.

This sequence belongs to the FPG family. In terms of assembly, monomer. It depends on Zn(2+) as a cofactor.

The enzyme catalyses Hydrolysis of DNA containing ring-opened 7-methylguanine residues, releasing 2,6-diamino-4-hydroxy-5-(N-methyl)formamidopyrimidine.. It catalyses the reaction 2'-deoxyribonucleotide-(2'-deoxyribose 5'-phosphate)-2'-deoxyribonucleotide-DNA = a 3'-end 2'-deoxyribonucleotide-(2,3-dehydro-2,3-deoxyribose 5'-phosphate)-DNA + a 5'-end 5'-phospho-2'-deoxyribonucleoside-DNA + H(+). Involved in base excision repair of DNA damaged by oxidation or by mutagenic agents. Acts as a DNA glycosylase that recognizes and removes damaged bases. Has a preference for oxidized purines, such as 7,8-dihydro-8-oxoguanine (8-oxoG). Has AP (apurinic/apyrimidinic) lyase activity and introduces nicks in the DNA strand. Cleaves the DNA backbone by beta-delta elimination to generate a single-strand break at the site of the removed base with both 3'- and 5'-phosphates. In Hahella chejuensis (strain KCTC 2396), this protein is Formamidopyrimidine-DNA glycosylase.